Consider the following 166-residue polypeptide: Ribosome maturation factor RimM (166 aa).

One can recognise a PRC barrel domain in the interval 95–164 (EEEYYAYELV…KKIIVKEELL (70 aa)).

Belongs to the RimM family. As to quaternary structure, binds ribosomal protein uS19.

The protein localises to the cytoplasm. Functionally, an accessory protein needed during the final step in the assembly of 30S ribosomal subunit, possibly for assembly of the head region. Essential for efficient processing of 16S rRNA. May be needed both before and after RbfA during the maturation of 16S rRNA. It has affinity for free ribosomal 30S subunits but not for 70S ribosomes. The protein is Ribosome maturation factor RimM of Aquifex aeolicus (strain VF5).